The following is a 243-amino-acid chain: Adenylate kinase 4 (243 aa).

Residue Gly40–Thr45 participates in ATP binding. Positions Ala60 to Val89 are NMP. AMP is bound by residues Thr61, Arg66, Glu87 to Val89, Gly115 to Arg118, and Gln122. The segment at Gly156–Asp193 is LID. Arg157 provides a ligand contact to ATP. Residues Arg190 and Arg201 each contribute to the AMP site.

Belongs to the adenylate kinase family.

Its subcellular location is the cytoplasm. It carries out the reaction AMP + ATP = 2 ADP. Functionally, catalyzes the reversible transfer of the terminal phosphate group between ATP and AMP. Plays an important role in cellular energy homeostasis and in adenine nucleotide metabolism. The protein is Adenylate kinase 4 (ADK-B) of Oryza sativa subsp. japonica (Rice).